A 312-amino-acid polypeptide reads, in one-letter code: Glyoxylate/hydroxypyruvate reductase A (312 aa).

Arg227 is a catalytic residue. The active-site Proton donor is His275.

The protein belongs to the D-isomer specific 2-hydroxyacid dehydrogenase family. GhrA subfamily.

Its subcellular location is the cytoplasm. It catalyses the reaction glycolate + NADP(+) = glyoxylate + NADPH + H(+). It carries out the reaction (R)-glycerate + NAD(+) = 3-hydroxypyruvate + NADH + H(+). The catalysed reaction is (R)-glycerate + NADP(+) = 3-hydroxypyruvate + NADPH + H(+). Its function is as follows. Catalyzes the NADPH-dependent reduction of glyoxylate and hydroxypyruvate into glycolate and glycerate, respectively. This chain is Glyoxylate/hydroxypyruvate reductase A, found in Salmonella choleraesuis (strain SC-B67).